A 480-amino-acid chain; its full sequence is GTPase Der (480 aa).

EngA-type G domains follow at residues Pro5–Glu170 and Leu178–Met351. GTP contacts are provided by residues Gly11–Ser18, Asp58–Ile62, Asn123–Asp126, Gly184–Ser191, Asp231–Val235, and Asn296–Asp299. Residues Phe352–Glu436 form the KH-like domain. A compositionally biased stretch (polar residues) spans Pro438–Leu454. The tract at residues Pro438–Arg480 is disordered. The span at Arg455–Arg480 shows a compositional bias: basic and acidic residues.

Belongs to the TRAFAC class TrmE-Era-EngA-EngB-Septin-like GTPase superfamily. EngA (Der) GTPase family. In terms of assembly, associates with the 50S ribosomal subunit.

Its function is as follows. GTPase that plays an essential role in the late steps of ribosome biogenesis. The sequence is that of GTPase Der from Psychrobacter cryohalolentis (strain ATCC BAA-1226 / DSM 17306 / VKM B-2378 / K5).